Consider the following 98-residue polypeptide: NADH-ubiquinone oxidoreductase chain 4L (98 aa).

Helical transmembrane passes span 2 to 22 (SPIY…TLLF), 26 to 46 (LMST…MVTS), and 61 to 81 (ITML…LVMI).

This sequence belongs to the complex I subunit 4L family. In terms of assembly, core subunit of respiratory chain NADH dehydrogenase (Complex I) which is composed of 45 different subunits.

Its subcellular location is the mitochondrion inner membrane. The enzyme catalyses a ubiquinone + NADH + 5 H(+)(in) = a ubiquinol + NAD(+) + 4 H(+)(out). Core subunit of the mitochondrial membrane respiratory chain NADH dehydrogenase (Complex I) which catalyzes electron transfer from NADH through the respiratory chain, using ubiquinone as an electron acceptor. Part of the enzyme membrane arm which is embedded in the lipid bilayer and involved in proton translocation. The chain is NADH-ubiquinone oxidoreductase chain 4L (MT-ND4L) from Nephelomys albigularis (Tomes's rice rat).